A 249-amino-acid polypeptide reads, in one-letter code: ATP synthase subunit a, chloroplastic (249 aa).

5 helical membrane-spanning segments follow: residues 40–60 (QVLI…VLAI), 97–117 (VPFI…GALL), 136–156 (INTT…AGLS), 201–221 (LVVV…VMFL), and 222–242 (GLFT…AYIG).

This sequence belongs to the ATPase A chain family. In terms of assembly, F-type ATPases have 2 components, CF(1) - the catalytic core - and CF(0) - the membrane proton channel. CF(1) has five subunits: alpha(3), beta(3), gamma(1), delta(1), epsilon(1). CF(0) has four main subunits: a, b, b' and c.

The protein localises to the plastid. The protein resides in the chloroplast thylakoid membrane. Its function is as follows. Key component of the proton channel; it plays a direct role in the translocation of protons across the membrane. This is ATP synthase subunit a, chloroplastic from Lepidium virginicum (Virginia pepperweed).